A 592-amino-acid polypeptide reads, in one-letter code: ATP-dependent RNA helicase DBP3 (592 aa).

Residues 1-146 form a disordered region; sequence MGKRPIEDDA…AGSYTEHTEL (146 aa). Over residues 19-31 the composition is skewed to basic residues; the sequence is KKSKKEKSGKSKK. Residues 73 to 82 are compositionally biased toward basic and acidic residues; that stretch reads EAKEASKAGK. Positions 97-108 are enriched in basic residues; the sequence is AARKAARKAEKK. Residues 116–141 are compositionally biased toward polar residues; the sequence is TASSAPTEASSVPAQTLSSSNAGSYT. The Q motif motif lies at 179-206; the sequence is VNFKYLPVTDESQRAPFAGFTAPTPIQA. In terms of domain architecture, Helicase ATP-binding spans 209 to 382; the sequence is WPFLLSGRDM…STFMVSPVRI (174 aa). 222 to 229 contributes to the ATP binding site; sequence AETGSGKT. Positions 330–333 match the DEAD box motif; the sequence is DEAD. One can recognise a Helicase C-terminal domain in the interval 413 to 562; the sequence is RLLQLLKQYQ…EVPEELLKFG (150 aa).

This sequence belongs to the DEAD box helicase family. DDX5/DBP2 subfamily.

It localises to the nucleus. It is found in the nucleolus. The catalysed reaction is ATP + H2O = ADP + phosphate + H(+). Functionally, ATP-dependent RNA helicase required for 60S ribosomal subunit synthesis. Involved in efficient pre-rRNA processing, predominantly at site A3, which is necessary for the normal formation of 25S and 5.8S rRNAs. The polypeptide is ATP-dependent RNA helicase DBP3 (DBP3) (Phaeosphaeria nodorum (strain SN15 / ATCC MYA-4574 / FGSC 10173) (Glume blotch fungus)).